Consider the following 189-residue polypeptide: Segregation and condensation protein B (189 aa).

The protein belongs to the ScpB family. As to quaternary structure, homodimer. Homodimerization may be required to stabilize the binding of ScpA to the Smc head domains. Component of a cohesin-like complex composed of ScpA, ScpB and the Smc homodimer, in which ScpA and ScpB bind to the head domain of Smc. The presence of the three proteins is required for the association of the complex with DNA.

It is found in the cytoplasm. In terms of biological role, participates in chromosomal partition during cell division. May act via the formation of a condensin-like complex containing Smc and ScpA that pull DNA away from mid-cell into both cell halves. In Streptococcus mitis, this protein is Segregation and condensation protein B.